The chain runs to 284 residues: Protein-S-isoprenylcysteine O-methyltransferase (284 aa).

The Cytoplasmic segment spans residues 1-16; that stretch reads MAGCAARVPPGSEARL. Residues 17-33 traverse the membrane as a helical segment; it reads SLATFLLGASVLALPLL. The Lumenal segment spans residues 34 to 41; that stretch reads TRAGLQGR. The chain crosses the membrane as a helical span at residues 42–59; the sequence is TGLALYVAGLNALLLLLY. Residues 60 to 69 are Cytoplasmic-facing; sequence RPPRYQIAIR. A helical transmembrane segment spans residues 70 to 87; the sequence is ACFLGFVFGCGVLLSFSQ. Residues 88–92 are Lumenal-facing; it reads SSWNH. A helical membrane pass occupies residues 93 to 112; sequence FGWYVCSLSLFHYSEYLVTA. Residues 113 to 131 lie on the Cytoplasmic side of the membrane; that stretch reads VNNPKSLSLDSFLLNHSLE. Residues 132–149 form a helical membrane-spanning segment; that stretch reads YTVAALSSWIEFTLENIF. At 150–154 the chain is on the lumenal side; that stretch reads WPELK. The helical transmembrane segment at 155 to 174 threads the bilayer; that stretch reads QITWLSAAGLLMVIFGECLR. Residues 175-212 lie on the Cytoplasmic side of the membrane; it reads KVAMFTAGSNFNHVVQSEKSDTHTLVTSGVYAWCRHPS. S-adenosyl-L-methionine contacts are provided by residues Q190, 197–200, Y205, and 210–213; these read HTLV and HPSY. The helical transmembrane segment at 213–228 threads the bilayer; the sequence is YVGWFYWSIGTQVMLC. A topological domain (lumenal) is located at residue N229. A helical transmembrane segment spans residues 230-244; sequence PICGVVYALTVWRFF. The Cytoplasmic segment spans residues 245 to 284; the sequence is RDRTEEEEISLIHFFGEEYLDYKKRVPTGLPFIKGVKVGL. Position 247 (R247) interacts with substrate. E251 provides a ligand contact to S-adenosyl-L-methionine.

It belongs to the class VI-like SAM-binding methyltransferase superfamily. Isoprenylcysteine carboxyl methyltransferase family.

It localises to the endoplasmic reticulum membrane. It carries out the reaction [protein]-C-terminal S-[(2E,6E)-farnesyl]-L-cysteine + S-adenosyl-L-methionine = [protein]-C-terminal S-[(2E,6E)-farnesyl]-L-cysteine methyl ester + S-adenosyl-L-homocysteine. In terms of biological role, catalyzes the post-translational methylation of isoprenylated C-terminal cysteine residues. The polypeptide is Protein-S-isoprenylcysteine O-methyltransferase (Rattus norvegicus (Rat)).